A 150-amino-acid chain; its full sequence is MRILGLDYGEKRIGVALCDELGLTAQALTTVIRKSWRNDVGIIASLVRTYDVEKIVIGYPLRLDGTEGIQCEKVVRFARRLEAALGIPVIRWDETLTTKEAEEILSRSGVPPRKRRGVVDRLAASLILQSYLDAISQEKIPSDACDANES.

It belongs to the YqgF nuclease family.

It localises to the cytoplasm. Functionally, could be a nuclease involved in processing of the 5'-end of pre-16S rRNA. The protein is Putative pre-16S rRNA nuclease of Syntrophus aciditrophicus (strain SB).